The primary structure comprises 327 residues: S-adenosylmethionine/S-adenosylhomocysteine transporter (327 aa).

A run of 10 helical transmembrane segments spans residues 22–42 (CDMA…SFAL), 53–73 (LFVT…LLLC), 85–105 (IMPI…LEFI), 114–134 (TACF…YVQL), 143–163 (LGGL…GGSE), 165–185 (VAEW…ATCL), 202–222 (SLSM…LSLI), 240–260 (LFLQ…YNLF), 271–291 (FLSF…WLLL), and 294–314 (SFPP…RLIY). In terms of domain architecture, EamA 1 spans 34–157 (FIWSSSFALS…LGLVSYLVYL (124 aa)). Residues 189-313 (GWTLLRKLGR…GFMVLGCRLI (125 aa)) form the EamA 2 domain.

It belongs to the drug/metabolite transporter (DMT) superfamily. 10 TMS drug/metabolite exporter (DME) (TC 2.A.7.3) family.

The protein localises to the cell membrane. Transports S-adenosylmethionine (SAM) and S-adenosylhomocysteine (SAH). Allows bacteria to acquire SAM from the eukaryotic host cell and to likely remove the toxic by-product SAH. This Chlamydia trachomatis serovar D (strain ATCC VR-885 / DSM 19411 / UW-3/Cx) protein is S-adenosylmethionine/S-adenosylhomocysteine transporter.